The primary structure comprises 618 residues: Prothrombin (618 aa).

The signal sequence occupies residues Met-1–Ser-24. Positions Gln-25 to Arg-43 are excised as a propeptide. The Gla domain occupies Ala-44–Val-90. 4-carboxyglutamate occurs at positions 50, 51, 58, 60, 63, 64, 69, 70, 73, and 76. The cysteines at positions 61 and 66 are disulfide-linked. 10 disulfides stabilise this stretch: Cys-91-Cys-104, Cys-109-Cys-187, Cys-130-Cys-170, Cys-158-Cys-182, Cys-215-Cys-293, Cys-236-Cys-276, Cys-264-Cys-288, Cys-333-Cys-479, Cys-388-Cys-404, and Cys-533-Cys-547. 2 Kringle domains span residues Cys-109–Cys-187 and Cys-215–Tyr-292. 2 N-linked (GlcNAc...) asparagine glycosylation sites follow: Asn-122 and Asn-144. The Peptidase S1 domain occupies Ile-361–Asp-615. The active-site Charge relay system is His-403. Residue Asn-413 is glycosylated (N-linked (GlcNAc...) asparagine). The active-site Charge relay system is the Asp-459. Residues Ala-548–Val-570 form a high affinity receptor-binding region which is also known as the TP508 peptide region. Asn-553 carries N-linked (GlcNAc...) asparagine glycosylation. A disulfide bond links Cys-561 and Cys-591. Residue Ser-565 is the Charge relay system of the active site.

Belongs to the peptidase S1 family. Heterodimer (named alpha-thrombin) of a light and a heavy chain; disulfide-linked. Forms a heterodimer with SERPINA5. In plasma, interacts (via N-terminus) with alpha-1-microglobulin; this interaction does not prevent the activation of prothrombin to thrombin. Post-translationally, the gamma-carboxyglutamyl residues, which bind calcium ions, result from the carboxylation of glutamyl residues by a microsomal enzyme, the vitamin K-dependent carboxylase. The modified residues are necessary for the calcium-dependent interaction with a negatively charged phospholipid surface, which is essential for the conversion of prothrombin to thrombin. In terms of processing, in the penultimate step of the coagulation cascade, prothrombin is converted to thrombin by the prothrombinase complex composed of factor Xa (F10), cofactor Va (F5), and phospholipids. This activation requires factor Xa-catalyzed sequential cleavage at 2 sites, Arg-311 and Arg-360, along 2 possible pathways. In the first pathway, the first cleavage occurs at Arg-311, leading to the formation of the inactive intermediate prethrombin-2. This pathway preferentially occurs on platelets and in the absence of cofactor Va. In the second pathway, the first cleavage occurs at Arg-360, which separates protease domain into 2 chains that remain connected through a disulfide bond and generates the active intermediate meizothrombin. The presence of cofactor Va directs activation along the meizothrombin pathway and greatly accelerates the rate of cleavage at Arg-360, but has a smaller effect on the cleavage of meizothrombin at Arg-311. Meizothrombin accumulates as an intermediate when prothrombinase is assembled on the membrane of red blood cells.

It catalyses the reaction Selective cleavage of Arg-|-Gly bonds in fibrinogen to form fibrin and release fibrinopeptides A and B.. With respect to regulation, activity is promoted in the presence of negatively charged surfaces, such as polyphosphate and dextran sulfate. Inhibited by SERPINA5. Functionally, thrombin, which cleaves bonds after Arg and Lys, converts fibrinogen to fibrin and activates factors V, VII, VIII, XIII, and, in complex with thrombomodulin, protein C. Functions in blood homeostasis, inflammation and wound healing. Activates coagulation factor XI (F11); activation is promoted by the contact with negatively charged surfaces. Triggers the production of pro-inflammatory cytokines, such as MCP-1/CCL2 and IL8/CXCL8, in endothelial cells. The protein is Prothrombin (F2) of Mus musculus (Mouse).